Here is a 177-residue protein sequence, read N- to C-terminus: Calerythrin (177 aa).

EF-hand domains lie at 5-40 (IASDRLKKRFDRWDFDGNGALERADFEKEAQHIAEA), 45-90 (AGAA…NLIF), 100-134 (VLGPVVKGTWGMCDKNADGQINADEFAAWLTALGM), and 134-169 (MSKAEAAEAFNQVDTNGNGELSLDELLTAVRDFHFG). Ca(2+)-binding residues include Asp18, Asp20, Asn22, and Asp29. Ca(2+) contacts are provided by Asp113, Asn115, Asp117, Gln119, Glu124, Asp147, Asn149, Asn151, Glu153, and Glu158.

This is Calerythrin from Saccharopolyspora erythraea (Streptomyces erythraeus).